Consider the following 530-residue polypeptide: B3 domain-containing protein REM-like 3 (530 aa).

2 DNA-binding regions (TF-B3) span residues 11–103 and 144–241; these read KPHF…FGLS and DFVV…FPLE. A disordered region spans residues 251 to 276; it reads SKKVKQEVEHEESVKEETNVESGKLK. The span at 254–276 shows a compositional bias: basic and acidic residues; the sequence is VKQEVEHEESVKEETNVESGKLK. 2 DNA-binding regions (TF-B3) span residues 296–393 and 431–530; these read NFVV…FPLE and SFVV…WDKK.

It localises to the nucleus. This is B3 domain-containing protein REM-like 3 from Arabidopsis thaliana (Mouse-ear cress).